The primary structure comprises 347 residues: Nuclear distribution protein nudE-like 1 (347 aa).

Residues 28–190 adopt a coiled-coil conformation; that stretch reads QSFQEARDEL…LAVRERQQEV (163 aa). The tract at residues 56 to 166 is self-association; the sequence is VQAEQRNRDL…LDEKESLLVS (111 aa). Positions 64–189 are interaction with KATNB1; that stretch reads DLQADNQRLK…ELAVRERQQE (126 aa). The tract at residues 114 to 133 is required for interaction with PAFAH1B1; the sequence is YVRELEQANDDLERAKRATI. Residues 175 to 347 are interaction with CENPF; it reads RDLRQELAVR…SAPGMLPLSV (173 aa). Residues 189 to 256 form an interaction with YWHAE region; sequence EVTRKSAPSS…SARISALNIV (68 aa). The segment at 191–347 is interaction with NEFL; it reads TRKSAPSSPT…SAPGMLPLSV (157 aa). The interval 195–256 is interaction with KATNA1; the sequence is APSSPTLDCE…SARISALNIV (62 aa). A Phosphoserine modification is found at Ser-215. At Thr-219 the chain carries Phosphothreonine; by CDK1 and MAPK1. Ser-231 carries the phosphoserine modification. Positions 241–280 are interaction with DISC1; it reads TSPLTPSARISALNIVGDLLRKVGALESKLAACRNFAKDQ. A Phosphoserine; by CDK1 modification is found at Ser-242. The residue at position 245 (Thr-245) is a Phosphothreonine; by CDK1 and MAPK1. The required for localization to the centrosome and interaction with dynein, dynactin, tubulin gamma, PCM1 and PCNT stretch occupies residues 256–291; it reads VGDLLRKVGALESKLAACRNFAKDQASRKSYISGNV. The S-palmitoyl cysteine; by ZDHHC2, ZDHHC3 and ZDHHC7 moiety is linked to residue Cys-273. Residues 314–347 form a disordered region; that stretch reads KGAVNGFDPAPPPPDPGLGSSRPSSAPGMLPLSV. Position 346 is a phosphoserine (Ser-346).

It belongs to the nudE family. In terms of assembly, self-associates. Interacts with DISC1, dynein, dynactin, tubulin gamma, KATNA1, KATNB1, microtubules, PAFAH1B1, PCM1, PCNT, and YWHAE. Interacts directly with NEFL and indirectly with NEFH. Interacts (via C-terminus) with CENPF. Interacts with ZNF365. Interacts with PLEKHM1 (via N- and C-terminus). Interacts with GTP-bound RAB9A; the interaction may lead to RAB9A-dynein motor tethering. Phosphorylated in mitosis. Can be phosphorylated by CDK1, CDK5 and MAPK1. Phosphorylation by CDK5 promotes interaction with KATNA1 and YWHAE. Post-translationally, palmitoylation at Cys-273 reduces affinity for dynein.

It localises to the cytoplasm. The protein localises to the cytoskeleton. Its subcellular location is the microtubule organizing center. The protein resides in the centrosome. It is found in the chromosome. It localises to the centromere. The protein localises to the kinetochore. Its subcellular location is the spindle. In terms of biological role, required for organization of the cellular microtubule array and microtubule anchoring at the centrosome. May regulate microtubule organization at least in part by targeting the microtubule severing protein KATNA1 to the centrosome. Also positively regulates the activity of the minus-end directed microtubule motor protein dynein. May enhance dynein-mediated microtubule sliding by targeting dynein to the microtubule plus ends. Required for several dynein- and microtubule-dependent processes such as the maintenance of Golgi integrity, the centripetal motion of secretory vesicles and the coupling of the nucleus and centrosome. Also required during brain development for the migration of newly formed neurons from the ventricular/subventricular zone toward the cortical plate. Required for mitosis in some cell types but appears to be dispensible for mitosis in cortical neuronal progenitors, which instead requires NDE1. Facilitates the polymerization of neurofilaments from the individual subunits NEFH and NEFL. Positively regulates lysosome peripheral distribution and ruffled border formation in osteoclasts. Plays a role, together with DISC1, in the regulation of neurite outgrowth. May act as a RAB9A/B effector that tethers RAB9-associated late endosomes to the dynein motor for their retrograde transport to the trans-Golgi network. This chain is Nuclear distribution protein nudE-like 1 (NDEL1), found in Macaca fascicularis (Crab-eating macaque).